We begin with the raw amino-acid sequence, 244 residues long: Orotidine 5'-phosphate decarboxylase (244 aa).

Substrate-binding positions include Asp18, Lys43, 73 to 82, Ser130, 182 to 192, Gly206, and Arg207; these read DLKLADIGYI and PGVGAQGGKPG. The active-site Proton donor is Lys75.

The protein belongs to the OMP decarboxylase family. Type 1 subfamily. As to quaternary structure, homodimer.

The enzyme catalyses orotidine 5'-phosphate + H(+) = UMP + CO2. It participates in pyrimidine metabolism; UMP biosynthesis via de novo pathway; UMP from orotate: step 2/2. Catalyzes the decarboxylation of orotidine 5'-monophosphate (OMP) to uridine 5'-monophosphate (UMP). In Aeropyrum pernix (strain ATCC 700893 / DSM 11879 / JCM 9820 / NBRC 100138 / K1), this protein is Orotidine 5'-phosphate decarboxylase.